Consider the following 343-residue polypeptide: Methionine import ATP-binding protein MetN (343 aa).

One can recognise an ABC transporter domain in the interval 2–241; the sequence is ITLSHITKQF…PKTPLAQAFI (240 aa). 38-45 serves as a coordination point for ATP; the sequence is GASGAGKS.

This sequence belongs to the ABC transporter superfamily. Methionine importer (TC 3.A.1.24) family. The complex is composed of two ATP-binding proteins (MetN), two transmembrane proteins (MetI) and a solute-binding protein (MetQ).

The protein localises to the cell inner membrane. It carries out the reaction L-methionine(out) + ATP + H2O = L-methionine(in) + ADP + phosphate + H(+). The catalysed reaction is D-methionine(out) + ATP + H2O = D-methionine(in) + ADP + phosphate + H(+). Part of the ABC transporter complex MetNIQ involved in methionine import. Responsible for energy coupling to the transport system. The sequence is that of Methionine import ATP-binding protein MetN from Sodalis glossinidius (strain morsitans).